The primary structure comprises 83 residues: Small ribosomal subunit protein bS16 (83 aa).

Belongs to the bacterial ribosomal protein bS16 family.

The chain is Small ribosomal subunit protein bS16 from Ectopseudomonas mendocina (strain ymp) (Pseudomonas mendocina).